Consider the following 341-residue polypeptide: Mitochondrial transcription factor 1 (341 aa).

The S-adenosyl-L-methionine site is built by Leu23, Glu77, Asp101, and Asn137.

The protein belongs to the class I-like SAM-binding methyltransferase superfamily. rRNA adenine N(6)-methyltransferase family.

It localises to the mitochondrion intermembrane space. Functionally, mitochondrial transcription factor that confers selective promoter recognition on the core subunit of the yeast mitochondrial RNA polymerase. Interacts with DNA in a non-specific manner. The polypeptide is Mitochondrial transcription factor 1 (MTF1) (Saccharomyces cerevisiae (strain ATCC 204508 / S288c) (Baker's yeast)).